The following is a 532-amino-acid chain: Phosphoenolpyruvate carboxykinase (ATP) (532 aa).

3 residues coordinate substrate: Arg60, Tyr194, and Lys200. ATP is bound by residues Lys200, His219, and 237 to 245 (GLSGTGKTT). The Mn(2+) site is built by Lys200 and His219. A Mn(2+)-binding site is contributed by Asp258. Residues Glu286, Arg324, and Thr449 each contribute to the ATP site. Residue Arg324 participates in substrate binding.

This sequence belongs to the phosphoenolpyruvate carboxykinase (ATP) family. Mn(2+) is required as a cofactor.

It localises to the cytoplasm. The enzyme catalyses oxaloacetate + ATP = phosphoenolpyruvate + ADP + CO2. The protein operates within carbohydrate biosynthesis; gluconeogenesis. Involved in the gluconeogenesis. Catalyzes the conversion of oxaloacetate (OAA) to phosphoenolpyruvate (PEP) through direct phosphoryl transfer between the nucleoside triphosphate and OAA. The protein is Phosphoenolpyruvate carboxykinase (ATP) of Cereibacter sphaeroides (strain ATCC 17029 / ATH 2.4.9) (Rhodobacter sphaeroides).